The sequence spans 574 residues: Arginine--tRNA ligase (574 aa).

The short motif at 126 to 136 (PNIAKRMHVGH) is the 'HIGH' region element.

It belongs to the class-I aminoacyl-tRNA synthetase family. Monomer.

It is found in the cytoplasm. The enzyme catalyses tRNA(Arg) + L-arginine + ATP = L-arginyl-tRNA(Arg) + AMP + diphosphate. This Chloroflexus aggregans (strain MD-66 / DSM 9485) protein is Arginine--tRNA ligase.